Reading from the N-terminus, the 711-residue chain is Polyribonucleotide nucleotidyltransferase (711 aa).

Mg(2+)-binding residues include Asp-486 and Asp-492. The region spanning 553–612 (PRIHTIKISPDKIKDVIGKGGSVIRALTEETGTTIEIEDDGTVKIAATDGEKAKFAIRRI) is the KH domain. An S1 motif domain is found at 622-690 (GRIYNGKVTR…RQGRVRLSIK (69 aa)). The interval 690-711 (KEATEQTQPAAAPEAPAAEQGE) is disordered. Over residues 694 to 711 (EQTQPAAAPEAPAAEQGE) the composition is skewed to low complexity.

This sequence belongs to the polyribonucleotide nucleotidyltransferase family. In terms of assembly, component of the RNA degradosome, which is a multiprotein complex involved in RNA processing and mRNA degradation. Mg(2+) serves as cofactor.

It localises to the cytoplasm. It carries out the reaction RNA(n+1) + phosphate = RNA(n) + a ribonucleoside 5'-diphosphate. Functionally, involved in mRNA degradation. Catalyzes the phosphorolysis of single-stranded polyribonucleotides processively in the 3'- to 5'-direction. This Enterobacter sp. (strain 638) protein is Polyribonucleotide nucleotidyltransferase.